Here is a 118-residue protein sequence, read N- to C-terminus: Small ribosomal subunit protein uS13 (118 aa).

The interval S94 to K118 is disordered.

The protein belongs to the universal ribosomal protein uS13 family. Part of the 30S ribosomal subunit. Forms a loose heterodimer with protein S19. Forms two bridges to the 50S subunit in the 70S ribosome.

In terms of biological role, located at the top of the head of the 30S subunit, it contacts several helices of the 16S rRNA. In the 70S ribosome it contacts the 23S rRNA (bridge B1a) and protein L5 of the 50S subunit (bridge B1b), connecting the 2 subunits; these bridges are implicated in subunit movement. Contacts the tRNAs in the A and P-sites. The protein is Small ribosomal subunit protein uS13 of Shewanella frigidimarina (strain NCIMB 400).